Reading from the N-terminus, the 446-residue chain is Aspartokinase (446 aa).

An RPE1 insert domain is found at 250-294 (IPLVKSTYMEESALNTKHSTKIDIPEDASGSTYKLPIELALQNRY).

This sequence belongs to the aspartokinase family.

The catalysed reaction is L-aspartate + ATP = 4-phospho-L-aspartate + ADP. It participates in amino-acid biosynthesis; L-lysine biosynthesis via DAP pathway; (S)-tetrahydrodipicolinate from L-aspartate: step 1/4. It functions in the pathway amino-acid biosynthesis; L-methionine biosynthesis via de novo pathway; L-homoserine from L-aspartate: step 1/3. The protein operates within amino-acid biosynthesis; L-threonine biosynthesis; L-threonine from L-aspartate: step 1/5. The chain is Aspartokinase (lysC) from Rickettsia prowazekii (strain Madrid E).